We begin with the raw amino-acid sequence, 196 residues long: Protein GrpE (196 aa).

Residues 1 to 24 (MAENERTTENFQPQDPSYAEAATT) are disordered.

This sequence belongs to the GrpE family. As to quaternary structure, homodimer.

The protein resides in the cytoplasm. In terms of biological role, participates actively in the response to hyperosmotic and heat shock by preventing the aggregation of stress-denatured proteins, in association with DnaK and GrpE. It is the nucleotide exchange factor for DnaK and may function as a thermosensor. Unfolded proteins bind initially to DnaJ; upon interaction with the DnaJ-bound protein, DnaK hydrolyzes its bound ATP, resulting in the formation of a stable complex. GrpE releases ADP from DnaK; ATP binding to DnaK triggers the release of the substrate protein, thus completing the reaction cycle. Several rounds of ATP-dependent interactions between DnaJ, DnaK and GrpE are required for fully efficient folding. This is Protein GrpE from Gloeobacter violaceus (strain ATCC 29082 / PCC 7421).